The following is a 218-amino-acid chain: rRNA methyltransferase 2, mitochondrial (218 aa).

Residues 59 to 62 (PGSW), Asp80, 96 to 97 (DI), and Asp133 contribute to the S-adenosyl-L-methionine site. The Proton acceptor role is filled by Lys173.

It belongs to the class I-like SAM-binding methyltransferase superfamily. RNA methyltransferase RlmE family.

Its subcellular location is the mitochondrion. It carries out the reaction a uridine in 21S rRNA + S-adenosyl-L-methionine = a 2'-O-methyluridine in 21S rRNA + S-adenosyl-L-homocysteine + H(+). Functionally, S-adenosyl-L-methionine-dependent 2'-O-ribose methyltransferase that catalyzes the formation of the 2'-O-methyluridine corresponding to position 2791 in S.cerevisiae 21S mitochondrial large subunit ribosomal RNA (mtLSU rRNA), a universally conserved modification in the peptidyl transferase domain of the mtLSU rRNA. This Schizosaccharomyces pombe (strain 972 / ATCC 24843) (Fission yeast) protein is rRNA methyltransferase 2, mitochondrial.